The sequence spans 560 residues: Choline/ethanolamine transporter FLVCR1 (560 aa).

Residues 1-22 (MVKLNDEEGAAMAPGHQPTNGY) are disordered. At 1-99 (MVKLNDEEGA…TPGTEGSPAP (99 aa)) the chain is on the cytoplasmic side. At Ser-56 the chain carries Phosphoserine. The interval 68–99 (QTPLAPEEETQTRLLPTGPGEETPGTEGSPAP) is disordered. Residues 83 to 95 (PTGPGEETPGTEG) are compositionally biased toward low complexity. Residues 100–124 (QTALSARRFVVLLIFSLYSLVNAFQ) traverse the membrane as a helical segment. Over 125–142 (WIQYSVISNVFEGFYGVS) the chain is Extracellular. A helical transmembrane segment spans residues 143-170 (SLHIDWLSMVYMLAYVPLIFPATWLLDT). The Cytoplasmic portion of the chain corresponds to 171–172 (RG). The chain crosses the membrane as a helical span at residues 173 to 192 (LRLTALLGSGLNCLGAWVKC). The Extracellular segment spans residues 193-199 (ASVQQHL). The helical transmembrane segment at 200-228 (FWVTMLGQCLCSVAQVFILGLPSRIASVW) threads the bilayer. Gln-214 serves as a coordination point for ethanolamine. Residues 229-233 (FGPKE) lie on the Cytoplasmic side of the membrane. A helical transmembrane segment spans residues 234–259 (VSTACATAVLGNQLGAAIGFLLPPVL). The Extracellular portion of the chain corresponds to 260–265 (VPNTQN). The N-linked (GlcNAc...) asparagine glycan is linked to Asn-265. A helical transmembrane segment spans residues 266–295 (NTDLLACNISTMFYGTSSVATFLCFLTIIA). The Cytoplasmic portion of the chain corresponds to 296–331 (FKEKPQYPPSQAQAALQNSPPAKYSYKKSIRNLFRN). Residues 332–362 (VPFVLLLITYGIITGAFYSVSTLLNQMILTY) traverse the membrane as a helical segment. At 363–366 (YKGE) the chain is on the extracellular side. The chain crosses the membrane as a helical span at residues 367–395 (EVSAGKIGLTLVVAGMVGSILCGFWLDYT). Residues 396–397 (KI) lie on the Cytoplasmic side of the membrane. A helical transmembrane segment spans residues 398-420 (YKQTTLIVYILSFLGMVIFTFTL). Topologically, residues 421–423 (DLG) are extracellular. A helical membrane pass occupies residues 424–453 (YGIVVFVTGGVLGFFMTGYLPLGFEFAVEI). The Cytoplasmic segment spans residues 454–461 (TYPESEGT). A helical membrane pass occupies residues 462–487 (SSGLLNAAAQIFGILFTLAQGKLTTD). Gln-471 is an ethanolamine binding site. Gln-471 contributes to the choline binding site. The Extracellular portion of the chain corresponds to 488–489 (YS). A helical transmembrane segment spans residues 490–512 (PKAGNIFLCVWLFLGIILTALIK). Residues 513–560 (SDLRRHNINIGIANGDIKAVPVEDTVEDSPTDKESKTIVMSKQSESAI) are Cytoplasmic-facing. A disordered region spans residues 537 to 560 (TVEDSPTDKESKTIVMSKQSESAI). Ser-541 is subject to Phosphoserine. A compositionally biased stretch (polar residues) spans 550-560 (IVMSKQSESAI).

This sequence belongs to the major facilitator superfamily. Feline leukemia virus subgroup C receptor (TC 2.A.1.28.1) family.

The protein resides in the cell membrane. It carries out the reaction choline(out) = choline(in). It catalyses the reaction ethanolamine(in) = ethanolamine(out). The catalysed reaction is heme b(in) = heme b(out). In terms of biological role, uniporter that mediates the transport of extracellular choline and ethanolamine into cells, thereby playing a key role in phospholipid biosynthesis. Choline and ethanolamine are the precursors of phosphatidylcholine and phosphatidylethanolamine, respectively, the two most abundant phospholipids. Transport is not coupled with proton transport and is exclusively driven by the choline (or ethanolamine) gradient across the plasma membrane. Also acts as a heme b transporter that mediates heme efflux from the cytoplasm to the extracellular compartment. Functionally, (Microbial infection) Confers susceptibility to Feline leukemia virus subgroup C (FeLV-C) infection, which is associated with fatal erythroid aplasia, also known as aplastic anemia. The polypeptide is Choline/ethanolamine transporter FLVCR1 (FLVCR1) (Felis catus (Cat)).